The primary structure comprises 147 residues: Ribosome maturation factor RimP (147 aa).

The protein belongs to the RimP family.

It is found in the cytoplasm. In terms of biological role, required for maturation of 30S ribosomal subunits. In Sulfurihydrogenibium sp. (strain YO3AOP1), this protein is Ribosome maturation factor RimP.